A 254-amino-acid chain; its full sequence is MPSMRKLWIALTFLTRIPLPQPEQVTSEEFTQSQHYYPLVGLILGGALWLALTLLLPHYPPLVTAALLLALELILTGGIHLDGLMDSMDGLLSARTPERMLEIMKDSHVGAFGALSAMVYLLLKFSLLAGLLALSSPLVPYLVLFMPILSRWIFLIGVHYFPYARAQGFGQGFHETSRQTRWLFLGEGLLLLFLTYWVLQWPGIAGFILATLFILLFTRKVSRLLGGLTGDLYGASIELSELLFLLGAFPLLYP.

6 helical membrane-spanning segments follow: residues 36-56 (YYPL…TLLL), 61-81 (PLVT…GIHL), 114-134 (ALSA…LLAL), 138-158 (LVPY…LIGV), 197-217 (WVLQ…ILLF), and 232-252 (LYGA…FPLL).

The protein belongs to the CobS family. It depends on Mg(2+) as a cofactor.

The protein localises to the cell membrane. The catalysed reaction is alpha-ribazole + adenosylcob(III)inamide-GDP = adenosylcob(III)alamin + GMP + H(+). It catalyses the reaction alpha-ribazole 5'-phosphate + adenosylcob(III)inamide-GDP = adenosylcob(III)alamin 5'-phosphate + GMP + H(+). It participates in cofactor biosynthesis; adenosylcobalamin biosynthesis; adenosylcobalamin from cob(II)yrinate a,c-diamide: step 7/7. Functionally, joins adenosylcobinamide-GDP and alpha-ribazole to generate adenosylcobalamin (Ado-cobalamin). Also synthesizes adenosylcobalamin 5'-phosphate from adenosylcobinamide-GDP and alpha-ribazole 5'-phosphate. The chain is Adenosylcobinamide-GDP ribazoletransferase from Desulfitobacterium hafniense (strain Y51).